A 335-amino-acid chain; its full sequence is Olfactory receptor 10R2 (335 aa).

At 1–45 (MPQILIFTYLNMFYFFPPLQILAENLTMVTEFLLLGFSSLGEIQL) the chain is on the extracellular side. N-linked (GlcNAc...) asparagine glycosylation is present at asparagine 25. Residues 46–66 (ALFVVFLFLYLVILSGNVTII) traverse the membrane as a helical segment. Residues 67–74 (SVIHLDKS) lie on the Cytoplasmic side of the membrane. The chain crosses the membrane as a helical span at residues 75–95 (LHTPMYFFLGILSTSETFYTF). The Extracellular segment spans residues 96–119 (VILPKMLINLLSVARTISFNCCAL). Cysteine 117 and cysteine 209 are joined by a disulfide. The helical transmembrane segment at 120 to 140 (QMFFFLGFAITNCLLLGVMGY) threads the bilayer. Residues 141–159 (DRYAAICHPLHYPTLMSWQ) are Cytoplasmic-facing. The helical transmembrane segment at 160-180 (VCGKLAAACAIGGFLASLTVV) threads the bilayer. Topologically, residues 181-217 (NLVFSLPFCSANKVNHYFCDISAVILLACTNTDVNEF) are extracellular. A helical transmembrane segment spans residues 218–237 (VIFICGVLVLVVPFLFICVS). At 238–257 (YLCILRTILKIPSAEGRRKA) the chain is on the cytoplasmic side. A helical transmembrane segment spans residues 258-278 (FSTCASHLSVVIVHYGCASFI). Over 279–291 (YLRPTANYVSNKD) the chain is Extracellular. A helical membrane pass occupies residues 292 to 312 (RLVTVTYTIVTPLLNPMVYSL). Topologically, residues 313–335 (RNKDVQLAIRKVLGKKGSLKLYN) are cytoplasmic.

It belongs to the G-protein coupled receptor 1 family.

The protein localises to the cell membrane. Its function is as follows. Odorant receptor. This chain is Olfactory receptor 10R2 (OR10R2), found in Homo sapiens (Human).